The following is a 948-amino-acid chain: Protein translocase subunit SecA (948 aa).

ATP is bound by residues glutamine 90, 108 to 112 (GEGKT), and aspartate 509.

It belongs to the SecA family. In terms of assembly, monomer and homodimer. Part of the essential Sec protein translocation apparatus which comprises SecA, SecYEG and auxiliary proteins SecDF. Other proteins may also be involved.

The protein localises to the cell inner membrane. Its subcellular location is the cellular thylakoid membrane. It is found in the cytoplasm. It carries out the reaction ATP + H2O + cellular proteinSide 1 = ADP + phosphate + cellular proteinSide 2.. In terms of biological role, part of the Sec protein translocase complex. Interacts with the SecYEG preprotein conducting channel. Has a central role in coupling the hydrolysis of ATP to the transfer of proteins into and across the cell membrane, serving as an ATP-driven molecular motor driving the stepwise translocation of polypeptide chains across the membrane. Probably participates in protein translocation into and across both the cytoplasmic and thylakoid membranes in cyanobacterial cells. In Prochlorococcus marinus (strain MIT 9313), this protein is Protein translocase subunit SecA.